The chain runs to 1548 residues: MAEREVESGPRKRFEQKSGAVFDEIVENCGGIMDTEMSEDIDHNLTPTLDSMSYGMPNQTGSENSLLDEDDYFLNSGDLAGIPVVGSDNEDEQDFSSKDNLVSSIHTDDSLEVERRVTQHESDNENEIQIQNKLKKDFPKQFDQVSVFKSIRKDFSLVRENSKETFSGKEKNRDLTYEREKRLDKPHKDLDSRLKSSFFDKAANQVEETLHTHLPQTPETNFRDSSYPFANKESIGSELGNSFASNIRIKEEPLDDEYDKAMAPQQGLLDKIKDEPDNAQEYSHGQQQKTQEGELKISAVFSVSGSPLAPQLTTGFQPSLASSGMNKMLPSVPATAVRVSCSGCKKILQKGQTAYQRKGSTQLFCSTLCLTGYTVPPARPPPPLTKKTCSSCSKDILNPKDVISAQFENTTTSKDFCSQSCLSTYELKKKPIVTINTNSISTKCSMCQKNAVIRHEVNYQNVVHKLCSDACFSKFRSANNLTMNCCENCGGYCYSGSGQCHMLQIEGQSKKFCSSSCITAYKQKSAKITPCALCKSLRSSAEMIENTNSLGKTELFCSVNCLSAYRVKMVTSAGVQVQCNSCKTSAIPQYHLAMSDGSIRNFCSYSCVVAFQNLFNKPTGMNSSVVPLSQGQVIVSIPTGSTVSAGGGSTSAVSPTSISSSAAAGLQRLAAQSQHVGFARSVVKLKCQHCNRLFATKPELLDYKGKMFQFCGKNCSDEYKKINNVMAMCEYCKIEKIVKETVRFSGADKSFCSEGCKLLYKHDLAKRWGNHCKMCSYCLQTSPKLVQNNLGGKVEEFCCEECMSKYTVLFYQMAKCDACKRQGKLSESLKWRGEMKHFCNLLCILMFCNQQSVCDPPSQNNAANISMVQAASAGPPSLRKDSTPVIANVVSLASAPAAQPTVNSNSVLQGAVPTVTAKIIGDASTQTDALKLPPSQPPRLLKNKALLCKPITQTKATSCKPHTQNKECQTEDTPSQPQIIVVPVPVPVFVPIPLHLYTQYAPVPFGIPVPMPVPMLIPSSMDSEDKVTESIEDIKEKLPTHPFEADLLEMAEMIAEDEEKKTLSQGESQTSEHELFLDTKIFEKDQGSTYSGDLESEAVSTPHSWEEELNHYALKSNAVQEADSELKQFSKGETEQDLEADFPSDSFDPLNKGQGIQARSRTRRRHRDGFPQPRRRGRKKSIVAVEPRSLIQGAFQGCSVSGMTLKYMYGVNAWKNWVQWKNAKEEQGDLKCGGVEQASSSPRSDPLGSTQDHALSQESSEPGCRVRSIKLKEDILSCTFAELSLGLCQFIQEVRRPNGEKYDPDSILYLCLGIQQYLFENGRIDNIFTEPYSRFMIELTKLLKIWEPTILPNGYMFSRIEEEHLWECKQLGAYSPIVLLNTLLFFNTKYFQLKNVTEHLKLSFAHVMRRTRTLKYSTKMTYLRFFPPLQKQESEPDKLTVGKRKRNEDDEVPVGVEMAENTDNPLRCPVRLYEFYLSKCSESVKQRNDVFYLQPERSCVPNSPMWYSTFPIDPGTLDTMLTRILMVREVHEELAKAKSEDSDVELSD.

Ala2 bears the N-acetylalanine mark. Thr107 bears the Phosphothreonine mark. Phosphoserine occurs at positions 110 and 122. Residues Lys140 and Lys149 each participate in a glycyl lysine isopeptide (Lys-Gly) (interchain with G-Cter in SUMO2) cross-link. The residue at position 162 (Ser162) is a Phosphoserine. Residues 162–189 form a disordered region; that stretch reads SKETFSGKEKNRDLTYEREKRLDKPHKD. A Glycyl lysine isopeptide (Lys-Gly) (interchain with G-Cter in SUMO2) cross-link involves residue Lys195. Ser197 is subject to Phosphoserine. Residues Lys201 and Lys232 each participate in a glycyl lysine isopeptide (Lys-Gly) (interchain with G-Cter in SUMO2) cross-link. Residue Ser242 is modified to Phosphoserine. Lys250 is covalently cross-linked (Glycyl lysine isopeptide (Lys-Gly) (interchain with G-Cter in SUMO1); alternate). Lys250 is covalently cross-linked (Glycyl lysine isopeptide (Lys-Gly) (interchain with G-Cter in SUMO2); alternate). Glycyl lysine isopeptide (Lys-Gly) (interchain with G-Cter in SUMO2) cross-links involve residues Lys260, Lys271, Lys273, Lys289, Lys327, Lys400, Lys428, and Lys430. 9 consecutive MYM-type zinc fingers follow at residues 362–402, 414–457, 464–499, 510–544, 554–592, 600–631, 708–742, 749–788, and 795–829; these read QLFC…PKDV, KDFC…RHEV, HKLC…GSGQ, KKFC…AEMI, ELFC…QYHL, RNFC…LSQG, FQFC…KETV, KSFC…LVQN, and EEFC…SESL. A Phosphoserine modification is found at Ser1030. Residues Lys1035 and Lys1061 each participate in a glycyl lysine isopeptide (Lys-Gly) (interchain with G-Cter in SUMO2) cross-link. A phosphoserine mark is found at Ser1064 and Ser1071. Residues Lys1080 and Lys1127 each participate in a glycyl lysine isopeptide (Lys-Gly) (interchain with G-Cter in SUMO2) cross-link. The span at 1124-1134 shows a compositional bias: basic and acidic residues; the sequence is SELKQFSKGET. 2 disordered regions span residues 1124 to 1183 and 1231 to 1260; these read SELK…KSIV and KCGG…QESS. Residues 1160 to 1181 are compositionally biased toward basic residues; that stretch reads SRTRRRHRDGFPQPRRRGRKKS. Residues Ser1181 and Ser1256 each carry the phosphoserine modification. Positions 1237–1260 are enriched in polar residues; that stretch reads QASSSPRSDPLGSTQDHALSQESS. Residue Lys1431 forms a Glycyl lysine isopeptide (Lys-Gly) (interchain with G-Cter in SUMO2) linkage. A phosphoserine mark is found at Ser1539, Ser1542, and Ser1547.

In terms of tissue distribution, expressed at higher level in heart, skeletal muscle, kidney and liver.

Its function is as follows. Plays a role in the regulation of cell morphology and cytoskeletal organization. This chain is Zinc finger MYM-type protein 4 (ZMYM4), found in Homo sapiens (Human).